The following is a 115-amino-acid chain: Small nuclear ribonucleoprotein Sm D2 (115 aa).

Positions 30–115 constitute a Sm domain; that stretch reads LSVLQQAVKN…VVLVVRIPSA (86 aa).

Belongs to the snRNP core protein family. As to quaternary structure, belongs to the 40S cdc5-associated complex (or cwf complex), a spliceosome sub-complex reminiscent of a late-stage spliceosome composed of the U2, U5 and U6 snRNAs and at least brr2, cdc5, cwf2/prp3, cwf3/syf1, cwf4/syf3, cwf5/ecm2, spp42/cwf6, cwf7/spf27, cwf8, cwf9, cwf10, cwf11, cwf12, prp45/cwf13, cwf14, cwf15, cwf16, cwf17, cwf18, cwf19, cwf20, cwf21, cwf22, cwf23, cwf24, cwf25, cwf26, cyp7/cwf27, cwf28, cwf29/ist3, lea1, msl1, prp5/cwf1, prp10, prp12/sap130, prp17, prp22, sap61, sap62, sap114, sap145, slu7, smb1, smd1, smd3, smf1, smg1 and syf2.

The protein localises to the nucleus. Its subcellular location is the cytoplasm. It localises to the cytosol. Its function is as follows. Plays a role in pre-mRNA splicing as a core component of the spliceosomal U1, U2, U4 and U5 small nuclear ribonucleoproteins (snRNPs), the building blocks of the spliceosome. The chain is Small nuclear ribonucleoprotein Sm D2 (smd2) from Schizosaccharomyces pombe (strain 972 / ATCC 24843) (Fission yeast).